Here is a 388-residue protein sequence, read N- to C-terminus: Chorismate synthase (388 aa).

Residues arginine 39 and arginine 45 each coordinate NADP(+). The segment at 95-115 (EKQKKIRRVSKPRPGHADLVG) is disordered. Residues 98–108 (KKIRRVSKPRP) show a composition bias toward basic residues. Residues 130 to 132 (RSS), 251 to 252 (NA), glycine 296, 311 to 315 (KPIPT), and arginine 337 each bind FMN.

It belongs to the chorismate synthase family. As to quaternary structure, homotetramer. The cofactor is FMNH2.

The enzyme catalyses 5-O-(1-carboxyvinyl)-3-phosphoshikimate = chorismate + phosphate. Its pathway is metabolic intermediate biosynthesis; chorismate biosynthesis; chorismate from D-erythrose 4-phosphate and phosphoenolpyruvate: step 7/7. In terms of biological role, catalyzes the anti-1,4-elimination of the C-3 phosphate and the C-6 proR hydrogen from 5-enolpyruvylshikimate-3-phosphate (EPSP) to yield chorismate, which is the branch point compound that serves as the starting substrate for the three terminal pathways of aromatic amino acid biosynthesis. This reaction introduces a second double bond into the aromatic ring system. The sequence is that of Chorismate synthase from Enterococcus faecalis (strain ATCC 700802 / V583).